Here is a 324-residue protein sequence, read N- to C-terminus: tRNA (cytidine(32)/guanosine(34)-2'-O)-methyltransferase (324 aa).

S-adenosyl-L-methionine-binding residues include G53, W55, D75, D91, and D116. K156 serves as the catalytic Proton acceptor. The segment at 221–240 (DFNQLDGPTRVIVPFVACGD) is required for binding to WDR6.

The protein belongs to the class I-like SAM-binding methyltransferase superfamily. RNA methyltransferase RlmE family. TRM7 subfamily. In terms of assembly, interacts with WDR6; the interaction is direct, and required for 2'-O-methylation of position 34 in substrate tRNAs.

The protein localises to the cytoplasm. Its subcellular location is the nucleus. It carries out the reaction cytidine(32)/guanosine(34) in tRNA + 2 S-adenosyl-L-methionine = 2'-O-methylcytidine(32)/2'-O-methylguanosine(34) in tRNA + 2 S-adenosyl-L-homocysteine + 2 H(+). Functionally, methylates the 2'-O-ribose of nucleotides at positions 32 and 34 of the tRNA anticodon loop of substrate tRNAs. Requisite for faithful cytoplasmic translation. Requires THADA for methylation of the cytidine at position 32 of the anticodon loop of substrate tRNAs. Requires WDR6 for methylation of the nucleotide at position 34 of the anticodon loop of substrate tRNAs. Promotes translation efficiency of the UUU codon. Plays a role in neurogenesis. Required for expression of genes involved in neurogenesis and mitochondrial translation and energy generation. Requisite for RNA-mediated gene silencing. May modify position 32 in tRNA(Arg(ACG)), tRNA(Gln(CUG)), tRNA(Leu(UAA)), tRNA(Leu(UAG)), tRNA(Leu(AAG)), tRNA(Leu(CAG)), tRNA(Phe(GAA)), tRNA(Trp(CCA)) and tRNA(Val(AAC)), and position 34 in tRNA(Phe(GAA)), tRNA(Leu(CAA)), tRNA(Leu(UAA)), tRNA(Sec(UCA)), and tRNA(Trp(CCA)). This Mus musculus (Mouse) protein is tRNA (cytidine(32)/guanosine(34)-2'-O)-methyltransferase.